A 417-amino-acid chain; its full sequence is Gamma-glutamyl phosphate reductase (417 aa).

It belongs to the gamma-glutamyl phosphate reductase family.

The protein resides in the cytoplasm. The catalysed reaction is L-glutamate 5-semialdehyde + phosphate + NADP(+) = L-glutamyl 5-phosphate + NADPH + H(+). The protein operates within amino-acid biosynthesis; L-proline biosynthesis; L-glutamate 5-semialdehyde from L-glutamate: step 2/2. Functionally, catalyzes the NADPH-dependent reduction of L-glutamate 5-phosphate into L-glutamate 5-semialdehyde and phosphate. The product spontaneously undergoes cyclization to form 1-pyrroline-5-carboxylate. This is Gamma-glutamyl phosphate reductase from Desulfitobacterium hafniense (strain DSM 10664 / DCB-2).